The sequence spans 91 residues: Small ribosomal subunit protein uS19 (91 aa).

The protein belongs to the universal ribosomal protein uS19 family.

Its function is as follows. Protein S19 forms a complex with S13 that binds strongly to the 16S ribosomal RNA. The polypeptide is Small ribosomal subunit protein uS19 (Dechloromonas aromatica (strain RCB)).